The sequence spans 144 residues: Thyrostimulin alpha-2 subunit (144 aa).

The signal sequence occupies residues 1–41; sequence MGRRDSGRAVAQRYRGVTRGVTVIACLMVVCACVGLCDATG. 4 cysteine pairs are disulfide-bonded: Cys52–Cys107, Cys66–Cys121, Cys76–Cys136, and Cys80–Cys138.

Belongs to the glycoprotein hormones subunit alpha family. As to quaternary structure, heterodimer with GPHB5; non-covalently-linked. As to expression, expressed by the venom duct.

It localises to the secreted. This Conus victoriae (Queen Victoria cone) protein is Thyrostimulin alpha-2 subunit.